A 429-amino-acid chain; its full sequence is Protein ABERRANT PANICLE ORGANIZATION 1 (429 aa).

Over residues M1–P11 the composition is skewed to pro residues. Residues M1–D21 form a disordered region. Positions P25 to H71 constitute an F-box domain. 2 helical membrane-spanning segments follow: residues L72–L92 and V112–L132. Kelch repeat units follow at residues M229–G277, R284–G339, and Y350–G397.

As to quaternary structure, part of a putative SCF (ASK/Cullin/F-box) ubiquitin ligase complex. Interacts with FL/APO2. As to expression, expressed in apical meristems and the lateral organ primordia throughout development. Expressed in seedlings, roots, leaves, shoot apical meristem (SAM), developing panicles, and, at lower levels, in developing seeds.

The protein resides in the membrane. The protein operates within protein modification; protein ubiquitination. Component of SCF(ASK-cullin-F-box) E3 ubiquitin ligase complexes, which may mediate the ubiquitination and subsequent proteasomal degradation of target proteins. Together with FL/APO2, involved in the temporal regulation of meristem identity during both vegetative and reproductive developments in an APO2-dependent manner. Promotes spikelet formation by suppressing the precocious conversion of inflorescence meristems to spikelet meristems, probably via a positive regulation of class-C floral homeotic genes, but not of class-B genes, and through the control of cell proliferation in meristems. Mediates culm development and strength/diameter enhancement at internodes. Required for the regulation of the plastochron, floral organ identity, and floral determinacy. Controls the number of primary rachis branches (PRBs). May trigger the formation of vascular bundle systems which, consequently, promote carbohydrate translocation to panicles. Involved in ozone-induced grain yield regulation. This is Protein ABERRANT PANICLE ORGANIZATION 1 from Oryza sativa subsp. japonica (Rice).